The sequence spans 159 residues: Membrane protein FAM174B (159 aa).

The signal sequence occupies residues 1 to 27; it reads MRAALPPARLLPLLLLLALLGAPAARA. The disordered stretch occupies residues 28 to 73; the sequence is SRAQSAAPPQPGAERQPRPPPGPGPGNATGTGSGEAAGGGGSSNSS. Residues 28–90 are Extracellular-facing; that stretch reads SRAQSAAPPQ…ISSLLRDLHT (63 aa). The span at 52-69 shows a compositional bias: gly residues; that stretch reads PGNATGTGSGEAAGGGGS. Residue N54 is glycosylated (N-linked (GlcNAc...) asparagine). Residues 91–111 traverse the membrane as a helical segment; sequence LKAAVIVACAFTAFLIACLLL. The Cytoplasmic portion of the chain corresponds to 112–159; sequence RVFRSGKRLKKTRKYDIITTPAERVEMAPLNEEDDEDEDSTVFDIKYR.

Belongs to the FAM174 family.

It localises to the cell membrane. The protein resides in the golgi apparatus. In terms of biological role, essential for Golgi structural integrity. This Bos taurus (Bovine) protein is Membrane protein FAM174B (FAM174B).